A 345-amino-acid polypeptide reads, in one-letter code: Serpentine receptor class beta-5 (345 aa).

Residues 1–22 are Extracellular-facing; the sequence is MAEINQTKCDLAFQISYHPIYR. Asn5 is a glycosylation site (N-linked (GlcNAc...) asparagine). A helical membrane pass occupies residues 23–43; that stretch reads LAQFWTLSVSLLAVPSLLYFL. Residues 44 to 57 lie on the Cytoplasmic side of the membrane; the sequence is LKRVLLLPFHGNLK. A helical transmembrane segment spans residues 58–78; that stretch reads CLLITYFSSIFLYALVLCFDF. Residues 79 to 103 are Extracellular-facing; it reads SYQCLIPFIVTTKCSLIIDQTLYKC. The helical transmembrane segment at 104–124 threads the bilayer; it reads GHMTSLFFLTTPMLLPFGFSI. At 125-142 the chain is on the cytoplasmic side; that stretch reads ERFVAVGMAYKYEKMRTL. Residues 143 to 163 traverse the membrane as a helical segment; the sequence is LGPILCFILVAPNFVVFYFLF. Over 164–189 the chain is Extracellular; sequence RDEQFTDSFISFLVLPNTPAVQFNNY. The chain crosses the membrane as a helical span at residues 190–210; it reads LWFLLYAKIGNFCCNCVLLIF. Topologically, residues 211 to 241 are cytoplasmic; it reads HKRFKNTYLKKKTSLSVRYALEEISNSSKFT. Residues 242–262 form a helical membrane-spanning segment; that stretch reads LILTFTHLVFFGAYTIGSILV. Over 263 to 280 the chain is Extracellular; it reads RTLGESFFGNFLNFYVAR. A helical membrane pass occupies residues 281 to 301; it reads GVNCAVPTYNLLIAFVGLISL. Topologically, residues 302-345 are cytoplasmic; it reads RQLNSRRHAKILTKVLIRVTGQEGARNYDDIIMQQWNTVSNRTR.

The protein belongs to the nematode receptor-like protein srb family. Expressed throughout the head.

Its subcellular location is the cell membrane. It is found in the perikaryon. It localises to the cell projection. The protein resides in the dendrite. In terms of biological role, G-protein coupled receptor. Plays a role in the navigational capacity of sperm and promotes the targeting of sperm derived from males to the fertilization site in the uterus of hermaphrodites. In Caenorhabditis elegans, this protein is Serpentine receptor class beta-5.